Here is a 613-residue protein sequence, read N- to C-terminus: Zinc metalloproteinase-disintegrin-like EoVMP2 (613 aa).

An N-terminal signal peptide occupies residues 1–20 (MMQVLLVTICLAVFPYQGSS). A propeptide spanning residues 21–194 (IILESGNVND…EASQLFATSE (174 aa)) is cleaved from the precursor. Glutamine 195 is subject to Pyrrolidone carboxylic acid. Residues 201–397 (RYIEFFIVVD…RNPKCMINKP (197 aa)) form the Peptidase M12B domain. Residue glutamate 204 participates in Ca(2+) binding. Residue asparagine 219 is glycosylated (N-linked (GlcNAc...) asparagine). Aspartate 288 contributes to the Ca(2+) binding site. 3 disulfide bridges follow: cysteine 312–cysteine 392, cysteine 352–cysteine 376, and cysteine 354–cysteine 359. Histidine 337 contacts Zn(2+). Residue glutamate 338 is part of the active site. Histidine 341 and histidine 347 together coordinate Zn(2+). Residue asparagine 375 is glycosylated (N-linked (GlcNAc...) asparagine). Residues cysteine 392, asparagine 395, valine 407, asparagine 410, leucine 412, glutamate 414, glutamate 417, and aspartate 420 each contribute to the Ca(2+) site. Residues 405–491 (PPVCGNGLLE…DCPIDGFHAN (87 aa)) enclose the Disintegrin domain. 14 disulfides stabilise this stretch: cysteine 408–cysteine 437, cysteine 419–cysteine 432, cysteine 421–cysteine 427, cysteine 431–cysteine 454, cysteine 445–cysteine 451, cysteine 450–cysteine 476, cysteine 463–cysteine 483, cysteine 470–cysteine 502, cysteine 495–cysteine 507, cysteine 514–cysteine 564, cysteine 529–cysteine 575, cysteine 542–cysteine 552, cysteine 559–cysteine 601, and cysteine 595–cysteine 606. The D/ECD-tripeptide signature appears at 469–471 (DCD).

Belongs to the venom metalloproteinase (M12B) family. P-III subfamily. P-IIIa sub-subfamily. In terms of assembly, monomer. The cofactor is Zn(2+). In terms of tissue distribution, expressed by the venom gland.

The protein localises to the secreted. In terms of biological role, snake venom zinc metalloprotease that possesses high hemorrhagic activity. It inhibits collagen-induced platelet aggregation and activates prothrombin (F2). This is Zinc metalloproteinase-disintegrin-like EoVMP2 (Svmp3-Eoc22) from Echis ocellatus (Ocellated saw-scaled viper).